The chain runs to 957 residues: Glycine dehydrogenase (decarboxylating) (957 aa).

Lysine 708 carries the post-translational modification N6-(pyridoxal phosphate)lysine.

It belongs to the GcvP family. The glycine cleavage system is composed of four proteins: P, T, L and H. Pyridoxal 5'-phosphate is required as a cofactor.

It carries out the reaction N(6)-[(R)-lipoyl]-L-lysyl-[glycine-cleavage complex H protein] + glycine + H(+) = N(6)-[(R)-S(8)-aminomethyldihydrolipoyl]-L-lysyl-[glycine-cleavage complex H protein] + CO2. Its function is as follows. The glycine cleavage system catalyzes the degradation of glycine. The P protein binds the alpha-amino group of glycine through its pyridoxal phosphate cofactor; CO(2) is released and the remaining methylamine moiety is then transferred to the lipoamide cofactor of the H protein. The chain is Glycine dehydrogenase (decarboxylating) from Salmonella newport (strain SL254).